Reading from the N-terminus, the 252-residue chain is Imidazole glycerol phosphate synthase subunit HisF (252 aa).

Active-site residues include Asp-11 and Asp-130.

The protein belongs to the HisA/HisF family. Heterodimer of HisH and HisF.

The protein resides in the cytoplasm. It carries out the reaction 5-[(5-phospho-1-deoxy-D-ribulos-1-ylimino)methylamino]-1-(5-phospho-beta-D-ribosyl)imidazole-4-carboxamide + L-glutamine = D-erythro-1-(imidazol-4-yl)glycerol 3-phosphate + 5-amino-1-(5-phospho-beta-D-ribosyl)imidazole-4-carboxamide + L-glutamate + H(+). The protein operates within amino-acid biosynthesis; L-histidine biosynthesis; L-histidine from 5-phospho-alpha-D-ribose 1-diphosphate: step 5/9. In terms of biological role, IGPS catalyzes the conversion of PRFAR and glutamine to IGP, AICAR and glutamate. The HisF subunit catalyzes the cyclization activity that produces IGP and AICAR from PRFAR using the ammonia provided by the HisH subunit. The protein is Imidazole glycerol phosphate synthase subunit HisF of Bacillus thuringiensis (strain Al Hakam).